The following is a 1197-amino-acid chain: Envelopment polyprotein (1197 aa).

The signal sequence occupies residues 1–16 (MYVLLTILTSVLVCEA). The Cytoplasmic segment spans residues 17–130 (IIRVSLSSTR…RDAKQIGRKT (114 aa)). Positions 131–153 (MAGIAMTVLPALAVFALAPVVFA) are internal signal sequence for glycoprotein N. Over 154 to 582 (EDPHLRNRPG…GLINYQCHTA (429 aa)) the chain is Lumenal. 12 cysteine pairs are disulfide-bonded: Cys179–Cys188, Cys229–Cys239, Cys250–Cys281, Cys271–Cys284, Cys304–Cys456, Cys322–Cys332, Cys374–Cys434, Cys402–Cys413, Cys420–Cys425, Cys479–Cys482, Cys486–Cys556, and Cys506–Cys511. A helical transmembrane segment spans residues 583-603 (LSAFVVVFVFSSIAIICLAIL). The Cytoplasmic segment spans residues 604-673 (YRVLKCLKIA…APIPRHAPIP (70 aa)). The golgi retention signal stretch occupies residues 608-650 (KCLKIAPRKVLNPLMWITAFIRWIYKKMVARVADNINQVNREI). The segment at 646 to 650 (VNREI) is important for correct targeting of the glycoproteins to the Golgi complex but not for heterodimerization. Residues 675-690 (YSTYLMLLLIVSYASA) are internal signal sequence for glycoprotein C. Disulfide bonds link Cys691-Cys731, Cys704-Cys713, Cys756-Cys852, Cys771-Cys965, Cys777-Cys825, Cys783-Cys832, Cys788-Cys814, Cys818-Cys823, Cys934-Cys947, Cys1029-Cys1101, Cys1039-Cys1042, and Cys1049-Cys1083. Over 691 to 1159 (CSELIQASSR…MSWFGGPLKT (469 aa)) the chain is Lumenal. Residues 777–783 (CHLVGEC) form a fusion loop region. N-linked (GlcNAc...) asparagine; by host glycosylation occurs at Asn794. Residues 819–830 (GGWGCGCFNVNP) form a fusion loop region. An N-linked (GlcNAc...) asparagine; by host glycan is attached at Asn1035. The N-linked (GlcNAc...) asparagine; by host glycan is linked to Asn1077. The chain crosses the membrane as a helical span at residues 1160–1180 (ILLICLYVALSIGLFFLLIYL). Residues 1181-1197 (GGTGLSKMWLAATKKAS) lie on the Cytoplasmic side of the membrane.

The protein belongs to the phlebovirus envelope glycoprotein family. Heterodimer with glycoprotein C. Homotrimer (postfusion). Interacts with nucleocapsid protein N and with the polymerase L in order to package them into virus particles. Interacts with host E3 ubiquitin-protein ligase UBR4; this interaction is important for viral RNA production. Interacts with host LRP1; this interaction facilitates virus entry into the host cell. As to quaternary structure, heterodimer with glycoprotein C. In terms of processing, specific enzymatic cleavages in vivo yield mature proteins including NSm protein, Glycoprotein C, and Glycoprotein N. Glycosylated. The glycans can attach to host CD209/DC-SIGN, and may play a role in virus entry into dendritic cells. Post-translationally, palmitoylated.

It is found in the virion membrane. The protein resides in the host Golgi apparatus membrane. The protein localises to the host endoplasmic reticulum membrane. Its subcellular location is the host mitochondrion outer membrane. It localises to the host Golgi apparatus. It is found in the virion. Its function is as follows. Structural component of the virion that interacts with glycoprotein C. It shields the hydrophobic fusion loops of the glycoprotein C, preventing premature fusion. The glycoprotein protrusions are arranged on an icosahedral lattice, with T=12 triangulation. They are able to attach the virion to the host cell receptor CD209/DC-SIGN and to promote fusion of membranes with the late endosome after endocytosis of the virion. Plays a role in the packaging of ribonucleoproteins and polymerase during virus assembly. Structural component of the virion that interacts with glycoprotein N. Acts as a class II fusion protein that is activated upon acidification and subsequent repositioning of the glycoprotein N. The glycoprotein protrusions are arranged on an icosahedral lattice, with T=12 triangulation. They are able to attach the virion to the host cell receptor CD209/DC-SIGN and to promote fusion of membranes with the late endosome after endocytosis of the virion. In terms of biological role, plays a role in the inhibition of virus-induced apoptosis. Plays a role for virus dissemination in vertebrates. Functionally, plays a role for virus dissemination in mosquitoes. May act as a structural virion protein in insects. The polypeptide is Envelopment polyprotein (GP) (Rift valley fever virus (strain ZH-548 M12) (RVFV)).